Consider the following 479-residue polypeptide: ATP synthase subunit beta (479 aa).

Residue Gly-168–Thr-175 coordinates ATP.

It belongs to the ATPase alpha/beta chains family. As to quaternary structure, F-type ATPases have 2 components, CF(1) - the catalytic core - and CF(0) - the membrane proton channel. CF(1) has five subunits: alpha(3), beta(3), gamma(1), delta(1), epsilon(1). CF(0) has three main subunits: a(1), b(2) and c(9-12). The alpha and beta chains form an alternating ring which encloses part of the gamma chain. CF(1) is attached to CF(0) by a central stalk formed by the gamma and epsilon chains, while a peripheral stalk is formed by the delta and b chains.

The protein resides in the cell membrane. The catalysed reaction is ATP + H2O + 4 H(+)(in) = ADP + phosphate + 5 H(+)(out). Functionally, produces ATP from ADP in the presence of a proton gradient across the membrane. The catalytic sites are hosted primarily by the beta subunits. The protein is ATP synthase subunit beta of Frankia casuarinae (strain DSM 45818 / CECT 9043 / HFP020203 / CcI3).